A 605-amino-acid polypeptide reads, in one-letter code: UvrABC system protein C (605 aa).

The GIY-YIG domain occupies 13 to 92 (SEPGVYLMKD…IKRYRPKYNV (80 aa)). In terms of domain architecture, UVR spans 205-240 (EKLMELLKEKMNESSMNFRFEEAAVYRDKIKSLEEM).

The protein belongs to the UvrC family. In terms of assembly, interacts with UvrB in an incision complex.

It localises to the cytoplasm. In terms of biological role, the UvrABC repair system catalyzes the recognition and processing of DNA lesions. UvrC both incises the 5' and 3' sides of the lesion. The N-terminal half is responsible for the 3' incision and the C-terminal half is responsible for the 5' incision. This chain is UvrABC system protein C, found in Clostridioides difficile (strain 630) (Peptoclostridium difficile).